The following is a 214-amino-acid chain: MFLRSLNLCTILLFLAISSQVSQSLHFELQSGRTKCISEDIKSNSMTVGKYTVVNPNEAHPSPQSHKISIRVTSSYGNTYHHAEDVESGQFAFTAVESGDYMACYTAVDHKPEVTLSIDFDWRTGVQSKSWSSVAKKSQVEVMEFDVKRLIETVNSIHEEMFYLREREEEMQNLNRATNSKMAWLSFLSLFVCLGVAGMQFVHLKTFFEKKKVI.

An N-terminal signal peptide occupies residues 1-24; sequence MFLRSLNLCTILLFLAISSQVSQS. Over 25 to 181 the chain is Lumenal; the sequence is LHFELQSGRT…QNLNRATNSK (157 aa). The GOLD domain occupies 34 to 149; the sequence is TKCISEDIKS…VEVMEFDVKR (116 aa). The stretch at 164–177 forms a coiled coil; sequence LREREEEMQNLNRA. An Omega-N-methylated arginine modification is found at R167. A helical membrane pass occupies residues 182 to 202; that stretch reads MAWLSFLSLFVCLGVAGMQFV. The Cytoplasmic portion of the chain corresponds to 203-214; it reads HLKTFFEKKKVI. Residues 207 to 208 carry the COPII vesicle coat-binding motif; that stretch reads FF. Positions 207-214 match the COPI vesicle coat-binding motif; it reads FFEKKKVI.

The protein belongs to the EMP24/GP25L family. As to quaternary structure, probably oligomerizes with other members of the EMP24/GP25L family. Associates with the COPI vesicle coat (coatomer). Associates with the COPII vesicle coat (coatomer).

The protein localises to the endoplasmic reticulum membrane. It is found in the golgi apparatus. Its subcellular location is the cis-Golgi network membrane. The protein resides in the golgi stack membrane. Involved in vesicular protein trafficking. Mainly functions in the early secretory pathway. Thought to act as cargo receptor at the lumenal side for incorporation of secretory cargo molecules into transport vesicles and to be involved in vesicle coat formation at the cytoplasmic side. The chain is Transmembrane emp24 domain-containing protein p24delta9 from Arabidopsis thaliana (Mouse-ear cress).